A 367-amino-acid chain; its full sequence is Probable thylakoidal processing peptidase 2, chloroplastic (367 aa).

Residues 1 to 68 (MAIRVTFTYS…NTWGPSSGPR (68 aa)) constitute a chloroplast transit peptide. A disordered region spans residues 53-72 (DKSPGSNTWGPSSGPRARPA). The span at 62 to 72 (GPSSGPRARPA) shows a compositional bias: low complexity. Residues 185 to 205 (EDAKAAFTAVTVSLLFRSALA) form a helical membrane-spanning segment. Over 206 to 367 (EPKSIPSTSM…VSQKRAVDVS (162 aa)) the chain is Lumenal, thylakoid. S214 is an active-site residue.

Belongs to the peptidase S26 family.

It localises to the plastid. The protein resides in the chloroplast thylakoid membrane. It carries out the reaction Cleavage of hydrophobic, N-terminal signal or leader sequences from secreted and periplasmic proteins.. Functionally, cleaves the thylakoid-transfer domain from a chloroplast protein. The polypeptide is Probable thylakoidal processing peptidase 2, chloroplastic (TPP2) (Arabidopsis thaliana (Mouse-ear cress)).